The sequence spans 174 residues: MATKVQGKHAAEKENDDGLREKMIAVNRVSKVVKGGRTMSFAALSVVGDGDGRIGMGKGKAREVPVSVQKAMEQARRGMFKVALKNGTLHHTVVGKHGASTVLISPAAEGTGVIAGGPMRAIFEVMGVRNVVAKSLGSSNPYNLVRATLNGLRASLTPAEVAAKRGKSVEEILG.

In terms of domain architecture, S5 DRBM spans 19 to 82 (LREKMIAVNR…EQARRGMFKV (64 aa)).

Belongs to the universal ribosomal protein uS5 family. In terms of assembly, part of the 30S ribosomal subunit. Contacts proteins S4 and S8.

With S4 and S12 plays an important role in translational accuracy. Functionally, located at the back of the 30S subunit body where it stabilizes the conformation of the head with respect to the body. In Bordetella bronchiseptica (strain ATCC BAA-588 / NCTC 13252 / RB50) (Alcaligenes bronchisepticus), this protein is Small ribosomal subunit protein uS5.